Consider the following 417-residue polypeptide: UDP-N-acetylglucosamine 1-carboxyvinyltransferase (417 aa).

22–23 (KN) is a binding site for phosphoenolpyruvate. UDP-N-acetyl-alpha-D-glucosamine is bound at residue arginine 92. Cysteine 116 functions as the Proton donor in the catalytic mechanism. Position 116 is a 2-(S-cysteinyl)pyruvic acid O-phosphothioketal (cysteine 116). Positions 304 and 326 each coordinate UDP-N-acetyl-alpha-D-glucosamine.

The protein belongs to the EPSP synthase family. MurA subfamily.

The protein resides in the cytoplasm. The catalysed reaction is phosphoenolpyruvate + UDP-N-acetyl-alpha-D-glucosamine = UDP-N-acetyl-3-O-(1-carboxyvinyl)-alpha-D-glucosamine + phosphate. It participates in cell wall biogenesis; peptidoglycan biosynthesis. Functionally, cell wall formation. Adds enolpyruvyl to UDP-N-acetylglucosamine. In Geotalea daltonii (strain DSM 22248 / JCM 15807 / FRC-32) (Geobacter daltonii), this protein is UDP-N-acetylglucosamine 1-carboxyvinyltransferase.